The following is a 371-amino-acid chain: Protein-glutamate methylesterase/protein-glutamine glutaminase 3 (371 aa).

The Response regulatory domain occupies 5–120; that stretch reads RVVVIDDSAY…SEEILTIRED (116 aa). Asp-56 is subject to 4-aspartylphosphate. Positions 174–362 constitute a CheB-type methylesterase domain; sequence PAGRLEVVAI…LDRMSREIIQ (189 aa). Catalysis depends on residues Ser-186, His-213, and Asp-309.

The protein belongs to the CheB family. Post-translationally, phosphorylated by CheA. Phosphorylation of the N-terminal regulatory domain activates the methylesterase activity.

The protein localises to the cytoplasm. The enzyme catalyses [protein]-L-glutamate 5-O-methyl ester + H2O = L-glutamyl-[protein] + methanol + H(+). The catalysed reaction is L-glutaminyl-[protein] + H2O = L-glutamyl-[protein] + NH4(+). Its function is as follows. Involved in chemotaxis. Part of a chemotaxis signal transduction system that modulates chemotaxis in response to various stimuli. Catalyzes the demethylation of specific methylglutamate residues introduced into the chemoreceptors (methyl-accepting chemotaxis proteins or MCP) by CheR. Also mediates the irreversible deamidation of specific glutamine residues to glutamic acid. This is Protein-glutamate methylesterase/protein-glutamine glutaminase 3 from Geobacter sulfurreducens (strain ATCC 51573 / DSM 12127 / PCA).